Reading from the N-terminus, the 317-residue chain is Protoheme IX farnesyltransferase (317 aa).

The next 8 membrane-spanning stretches (helical) occupy residues 44–64 (IGLI…ANTF), 93–113 (HASV…WVLC), 116–136 (VLAG…YTKY), 143–163 (LNIV…WAVI), 178–198 (AIVL…ALAM), 221–241 (VTRQ…LLIP), 243–263 (ASWI…VMAV), and 288–308 (LAVY…TIGG).

This sequence belongs to the UbiA prenyltransferase family. Protoheme IX farnesyltransferase subfamily.

The protein resides in the cell membrane. It catalyses the reaction heme b + (2E,6E)-farnesyl diphosphate + H2O = Fe(II)-heme o + diphosphate. The protein operates within porphyrin-containing compound metabolism; heme O biosynthesis; heme O from protoheme: step 1/1. Functionally, converts heme B (protoheme IX) to heme O by substitution of the vinyl group on carbon 2 of heme B porphyrin ring with a hydroxyethyl farnesyl side group. This is Protoheme IX farnesyltransferase from Corynebacterium diphtheriae (strain ATCC 700971 / NCTC 13129 / Biotype gravis).